We begin with the raw amino-acid sequence, 466 residues long: Bifunctional protein GlmU (466 aa).

A pyrophosphorylase region spans residues 1-233 (MLHKSVLGLV…ADEAMGANDR (233 aa)). UDP-N-acetyl-alpha-D-glucosamine is bound by residues 11–14 (LAAG), K25, Q79, and 84–85 (GT). D108 lines the Mg(2+) pocket. Residues G143, E158, N173, and N231 each coordinate UDP-N-acetyl-alpha-D-glucosamine. N231 is a binding site for Mg(2+). A linker region spans residues 234–254 (AQLAALEAVYRQRKVQELFAQ). Residues 255-466 (GVTLIDPNRI…QKKKEHKNDA (212 aa)) form an N-acetyltransferase region. Positions 337 and 355 each coordinate UDP-N-acetyl-alpha-D-glucosamine. Residue H367 is the Proton acceptor of the active site. 2 residues coordinate UDP-N-acetyl-alpha-D-glucosamine: Y370 and N381. Acetyl-CoA is bound by residues A384, 390 to 391 (NY), S409, A427, and R444.

In the N-terminal section; belongs to the N-acetylglucosamine-1-phosphate uridyltransferase family. It in the C-terminal section; belongs to the transferase hexapeptide repeat family. In terms of assembly, homotrimer. Mg(2+) is required as a cofactor.

The protein localises to the cytoplasm. The catalysed reaction is alpha-D-glucosamine 1-phosphate + acetyl-CoA = N-acetyl-alpha-D-glucosamine 1-phosphate + CoA + H(+). The enzyme catalyses N-acetyl-alpha-D-glucosamine 1-phosphate + UTP + H(+) = UDP-N-acetyl-alpha-D-glucosamine + diphosphate. It participates in nucleotide-sugar biosynthesis; UDP-N-acetyl-alpha-D-glucosamine biosynthesis; N-acetyl-alpha-D-glucosamine 1-phosphate from alpha-D-glucosamine 6-phosphate (route II): step 2/2. Its pathway is nucleotide-sugar biosynthesis; UDP-N-acetyl-alpha-D-glucosamine biosynthesis; UDP-N-acetyl-alpha-D-glucosamine from N-acetyl-alpha-D-glucosamine 1-phosphate: step 1/1. It functions in the pathway bacterial outer membrane biogenesis; LPS lipid A biosynthesis. Functionally, catalyzes the last two sequential reactions in the de novo biosynthetic pathway for UDP-N-acetylglucosamine (UDP-GlcNAc). The C-terminal domain catalyzes the transfer of acetyl group from acetyl coenzyme A to glucosamine-1-phosphate (GlcN-1-P) to produce N-acetylglucosamine-1-phosphate (GlcNAc-1-P), which is converted into UDP-GlcNAc by the transfer of uridine 5-monophosphate (from uridine 5-triphosphate), a reaction catalyzed by the N-terminal domain. The sequence is that of Bifunctional protein GlmU from Dichelobacter nodosus (strain VCS1703A).